The sequence spans 802 residues: Spondin-1 (802 aa).

The first 23 residues, 1–23 (MAARLRPLALRLLARTFPLVARG), serve as a signal peptide directing secretion. The Reelin domain occupies 24–189 (FSDETLEKAA…DSASEGVTDK (166 aa)). Cystine bridges form between cysteine 39/cysteine 123, cysteine 151/cysteine 177, cysteine 194/cysteine 331, cysteine 195/cysteine 335, cysteine 197/cysteine 410, cysteine 438/cysteine 475, cysteine 449/cysteine 484, cysteine 454/cysteine 489, cysteine 497/cysteine 533, cysteine 508/cysteine 512, cysteine 543/cysteine 549, cysteine 554/cysteine 590, cysteine 565/cysteine 569, cysteine 600/cysteine 605, cysteine 610/cysteine 645, cysteine 621/cysteine 625, and cysteine 655/cysteine 660. A Spondin domain is found at 190-383 (PTLDCCACGT…LTSLDHPQSP (194 aa)). The N-linked (GlcNAc...) asparagine glycan is linked to asparagine 209. The Ca(2+) site is built by aspartate 320, aspartate 349, and aspartate 353. 6 consecutive TSP type-1 domains span residues 437-490 (TCIY…PGCS), 496-550 (TCMM…EECS), 553-606 (SCLV…PECH), 609-661 (PCLL…PECP), 663-716 (DCEL…RKCL), and 749-801 (VCRL…NVHP). An N-linked (GlcNAc...) asparagine glycan is attached at asparagine 676.

It is found in the secreted. The protein localises to the extracellular space. Its subcellular location is the extracellular matrix. Functionally, cell adhesion protein that promotes the attachment of spinal cord and sensory neuron cells and the outgrowth of neurites in vitro. May contribute to the growth and guidance of axons in both the spinal cord and the PNS. Somite-derived spondin 1 is an inhibitory signal involved in patterning the segmental migration of neural crest cells and their topographical segregation within the rostral somites in vitro. May be required to prevent the lateral drifting of the commissural axons after having crossed the floor plate. The sequence is that of Spondin-1 (SPON1) from Gallus gallus (Chicken).